Reading from the N-terminus, the 777-residue chain is Semaphorin-3D (777 aa).

The signal sequence occupies residues Met1–Thr37. In terms of domain architecture, Sema spans Arg44–Leu531. A disulfide bridge connects residues Cys117 and Cys128. Residue Asn139 is glycosylated (N-linked (GlcNAc...) asparagine). Cystine bridges form between Cys146–Cys155, Cys286–Cys398, Cys310–Cys358, and Cys534–Cys552. Residues Arg533–Trp585 enclose the PSI domain. Residues Ser592–Thr680 form the Ig-like C2-type domain. Residues Asn607 and Asn724 are each glycosylated (N-linked (GlcNAc...) asparagine). Cys665 and Cys731 are oxidised to a cystine. Basic residues predominate over residues Arg740 to His765. The disordered stretch occupies residues Arg740 to Thr777. Residues Arg766–Thr777 are compositionally biased toward basic and acidic residues.

The protein belongs to the semaphorin family.

It localises to the secreted. Induces the collapse and paralysis of neuronal growth cones. Could potentially act as repulsive cues toward specific neuronal populations. Binds to neuropilin. The chain is Semaphorin-3D (Sema3d) from Mus musculus (Mouse).